A 396-amino-acid polypeptide reads, in one-letter code: Mannonate dehydratase (396 aa).

Belongs to the mannonate dehydratase family. Requires Fe(2+) as cofactor. It depends on Mn(2+) as a cofactor.

It carries out the reaction D-mannonate = 2-dehydro-3-deoxy-D-gluconate + H2O. Its pathway is carbohydrate metabolism; pentose and glucuronate interconversion. In terms of biological role, catalyzes the dehydration of D-mannonate. This chain is Mannonate dehydratase, found in Serratia proteamaculans (strain 568).